We begin with the raw amino-acid sequence, 447 residues long: Chromosomal replication initiator protein DnaA (447 aa).

The domain I, interacts with DnaA modulators stretch occupies residues 1–79 (MVSCENLWQQ…TGQEITVKLI (79 aa)). A domain II region spans residues 79 to 105 (ITDGLEPHSLIGQESSLPMETTPKNAT). The tract at residues 106 to 322 (ALNGKYTFSR…GALIRAIAYT (217 aa)) is domain III, AAA+ region. G150, G152, K153, and T154 together coordinate ATP. The segment at 323–447 (SLSNVAMTVE…INIAGQAPES (125 aa)) is domain IV, binds dsDNA.

Belongs to the DnaA family. In terms of assembly, oligomerizes as a right-handed, spiral filament on DNA at oriC.

The protein resides in the cytoplasm. Its function is as follows. Plays an essential role in the initiation and regulation of chromosomal replication. ATP-DnaA binds to the origin of replication (oriC) to initiate formation of the DNA replication initiation complex once per cell cycle. Binds the DnaA box (a 9 base pair repeat at the origin) and separates the double-stranded (ds)DNA. Forms a right-handed helical filament on oriC DNA; dsDNA binds to the exterior of the filament while single-stranded (ss)DNA is stabiized in the filament's interior. The ATP-DnaA-oriC complex binds and stabilizes one strand of the AT-rich DNA unwinding element (DUE), permitting loading of DNA polymerase. After initiation quickly degrades to an ADP-DnaA complex that is not apt for DNA replication. Binds acidic phospholipids. Isolated domain IV (residues 348-447) binds both E.coli and B.subtilis oriC. The protein is Chromosomal replication initiator protein DnaA of Synechocystis sp. (strain ATCC 27184 / PCC 6803 / Kazusa).